The primary structure comprises 198 residues: Large ribosomal subunit protein bL25 (198 aa).

The protein belongs to the bacterial ribosomal protein bL25 family. CTC subfamily. Part of the 50S ribosomal subunit; part of the 5S rRNA/L5/L18/L25 subcomplex. Contacts the 5S rRNA. Binds to the 5S rRNA independently of L5 and L18.

This is one of the proteins that binds to the 5S RNA in the ribosome where it forms part of the central protuberance. The chain is Large ribosomal subunit protein bL25 from Phocaeicola vulgatus (strain ATCC 8482 / DSM 1447 / JCM 5826 / CCUG 4940 / NBRC 14291 / NCTC 11154) (Bacteroides vulgatus).